The chain runs to 337 residues: Pantothenate synthetase (337 aa).

31 to 38 is a binding site for ATP; the sequence is MGALHEGH. His-38 functions as the Proton donor in the catalytic mechanism. Gln-65 is a (R)-pantoate binding site. A beta-alanine-binding site is contributed by Gln-65. 152–155 contacts ATP; sequence GQKD. Gln-158 provides a ligand contact to (R)-pantoate. ATP contacts are provided by residues Val-181 and 189-192; that span reads LSSR.

The protein belongs to the pantothenate synthetase family. As to quaternary structure, homodimer.

It is found in the cytoplasm. The catalysed reaction is (R)-pantoate + beta-alanine + ATP = (R)-pantothenate + AMP + diphosphate + H(+). It functions in the pathway cofactor biosynthesis; (R)-pantothenate biosynthesis; (R)-pantothenate from (R)-pantoate and beta-alanine: step 1/1. Its function is as follows. Catalyzes the condensation of pantoate with beta-alanine in an ATP-dependent reaction via a pantoyl-adenylate intermediate. The polypeptide is Pantothenate synthetase (Streptomyces coelicolor (strain ATCC BAA-471 / A3(2) / M145)).